Consider the following 437-residue polypeptide: Selenocysteine lyase (437 aa).

Methionine 1 is subject to N-acetylmethionine. The disordered stretch occupies residues 1–30; sequence MEAAGARNRDARSRAEKSPPESRKVYMDYN. Residues 7-26 are compositionally biased toward basic and acidic residues; sequence RNRDARSRAEKSPPESRKVY. The residue at position 252 (lysine 252) is an N6-(pyridoxal phosphate)lysine. Residue cysteine 380 is the S-selanylcysteine intermediate of the active site.

Belongs to the class-V pyridoxal-phosphate-dependent aminotransferase family. As to quaternary structure, homodimer. Requires pyridoxal 5'-phosphate as cofactor.

It localises to the cytoplasm. Its subcellular location is the cytosol. It carries out the reaction L-selenocysteine + AH2 = hydrogenselenide + L-alanine + A + H(+). Catalyzes the decomposition of L-selenocysteine to L-alanine and elemental selenium. In Bos taurus (Bovine), this protein is Selenocysteine lyase (SCLY).